Here is a 570-residue protein sequence, read N- to C-terminus: Sulfite reductase [NADPH] hemoprotein beta-component (570 aa).

Cys-434, Cys-440, Cys-479, and Cys-483 together coordinate [4Fe-4S] cluster. Position 483 (Cys-483) interacts with siroheme.

The protein belongs to the nitrite and sulfite reductase 4Fe-4S domain family. As to quaternary structure, alpha(8)-beta(8). The alpha component is a flavoprotein, the beta component is a hemoprotein. Siroheme serves as cofactor. [4Fe-4S] cluster is required as a cofactor.

It carries out the reaction hydrogen sulfide + 3 NADP(+) + 3 H2O = sulfite + 3 NADPH + 4 H(+). It participates in sulfur metabolism; hydrogen sulfide biosynthesis; hydrogen sulfide from sulfite (NADPH route): step 1/1. Its function is as follows. Component of the sulfite reductase complex that catalyzes the 6-electron reduction of sulfite to sulfide. This is one of several activities required for the biosynthesis of L-cysteine from sulfate. The chain is Sulfite reductase [NADPH] hemoprotein beta-component from Escherichia coli (strain B / BL21-DE3).